Consider the following 571-residue polypeptide: uncharacterized protein (571 aa).

Residues 1–3 (MNS) are Cytoplasmic-facing. The chain crosses the membrane as a helical span at residues 4-24 (LQILSFVGFTLLVAVITWWKV). Residues 25–74 (RKTDTGSQQGYFLAGRSLKAPVIAASLMLTNLSTEQLVGLSGQAYKSGMS) lie on the Periplasmic side of the membrane. The helical transmembrane segment at 75–95 (VMGWEVTSAVTLIFLALIFLP) threads the bilayer. Over 96–118 (RYLKRGIATIPDFLEERYDKTTR) the chain is Cytoplasmic. A helical membrane pass occupies residues 119–139 (IIIDFCFLIATGVCFLPIVLY). At 140-162 (SGALALNSLFHVGESLQISHGAA) the chain is on the periplasmic side. A helical membrane pass occupies residues 163–183 (IWLLVILLGLAGILYAVIGGL). The Cytoplasmic portion of the chain corresponds to 184 to 191 (RAMAVADS). A helical transmembrane segment spans residues 192–212 (INGIGLVIGGLMVPVFGLIAM). At 213–240 (GKGSFMQGIEQLTTVHAEKLNSIGGPTD) the chain is on the periplasmic side. A helical transmembrane segment spans residues 241-261 (PLPIGAAFTGLILVNTFYWCT). Topologically, residues 262 to 283 (NQGIVQRTLASKSLAEGQKGAL) are cytoplasmic. Residues 284-304 (LTAVLKMLDPLVLVLPGLIAF) traverse the membrane as a helical segment. At 305–324 (HLYQDLPKADMAYPTLVNNV) the chain is on the periplasmic side. A helical transmembrane segment spans residues 325–345 (LPVPMVGFFGAVLFGAVISTF). Residues 346-380 (NGFLNSASTLFSMGIYRRIINQNAEPQQLVTVGRK) are Cytoplasmic-facing. A helical transmembrane segment spans residues 381 to 401 (FGFFIAIVSVLVAPWIANAPQ). The Periplasmic segment spans residues 402 to 415 (GLYSWMKQLNGIYN). Residues 416–436 (VPLVTIIIMGFFFPRIPALAA) form a helical membrane-spanning segment. Position 437 (K437) is a topological domain, cytoplasmic. Residues 438–458 (VAMGIGIISYITINYLVKFDF) traverse the membrane as a helical segment. The Periplasmic segment spans residues 459-460 (HF). The helical transmembrane segment at 461 to 481 (LYVLACTFCINVVVMLVIGFI) threads the bilayer. At 482–505 (KPRATPFTFKDAFAVDMKPWKNVK) the chain is on the cytoplasmic side. Residues 506–526 (IASIGILFAMIGVYAGLAEFG) traverse the membrane as a helical segment. Residues 527–532 (GYGTRW) are Periplasmic-facing. A helical membrane pass occupies residues 533 to 553 (LAMISYFIAAVVIVYLIFDSW). The Cytoplasmic segment spans residues 554 to 571 (RHRHDPAVTFTPDGKDSL).

This sequence belongs to the sodium:solute symporter (SSF) (TC 2.A.21) family.

The protein resides in the cell inner membrane. This is an uncharacterized protein from Escherichia coli (strain K12).